Reading from the N-terminus, the 84-residue chain is Small ribosomal subunit protein uS17 (84 aa).

The protein belongs to the universal ribosomal protein uS17 family. In terms of assembly, part of the 30S ribosomal subunit.

One of the primary rRNA binding proteins, it binds specifically to the 5'-end of 16S ribosomal RNA. The sequence is that of Small ribosomal subunit protein uS17 from Legionella pneumophila (strain Paris).